A 549-amino-acid chain; its full sequence is MKNINPTQTAAWQALQKHFDEMKDVTIADLFAKDGDRFSKFSATFDDQMLVDYSKNRITEETLAKLQDLAKECDLAGAIKSMFSGEKINRTENRAVLHVALRNRSNTPILVDGKDVMPEVNAVLEKMKTFSEAIISGEWKGYTGKAITDVVNIGIGGSDLGPYMVTEALRPYKNHLNMHFVSNVDGTHISEVLKKVNPETTLFLVASKTFTTQETMTNAHSARDWFLKAAGDEKHVAKHFAALSTNAKAVGEFGIDTANMFEFWDWVGGRYSLWSAIGLSIVLSIGFDNFVELLSGAHAMDKHFSTTPAEKNLPVLLALIGIWYNNFFGAETEAILPYDQYMHRFAAYFQQGNMESNGKYVDRNGNVVDYQTGPIIWGEPGTNGQHAFYQLIHQGTKMVPCDFIAPAITHNPLSDHHQKLLSNFFAQTEALAFGKSREVVEQEYRDQGKDPATLDYVVPFKVFEGNRPTNSILLREITPFSLGALIALYEHKIFTQGVILNIFTFDQWGVELGKQLANRILPELKDDKEISSHDSSTNGLINRYKAWRG.

N6-acetyllysine occurs at positions 80, 228, and 234. The Proton donor role is filled by E355. Catalysis depends on residues H386 and K514.

Belongs to the GPI family.

It is found in the cytoplasm. The enzyme catalyses alpha-D-glucose 6-phosphate = beta-D-fructose 6-phosphate. The protein operates within carbohydrate biosynthesis; gluconeogenesis. It participates in carbohydrate degradation; glycolysis; D-glyceraldehyde 3-phosphate and glycerone phosphate from D-glucose: step 2/4. Functionally, catalyzes the reversible isomerization of glucose-6-phosphate to fructose-6-phosphate. The sequence is that of Glucose-6-phosphate isomerase from Shigella flexneri.